The primary structure comprises 310 residues: Dihydroorotate dehydrogenase B (NAD(+)), catalytic subunit (310 aa).

FMN is bound by residues Ser-19 and 43–44 (KA). Substrate contacts are provided by residues Lys-43 and 67-71 (NAIGL). Asn-97 and Asn-125 together coordinate FMN. Position 125 (Asn-125) interacts with substrate. Cys-128 (nucleophile) is an active-site residue. The FMN site is built by Lys-163 and Ile-189. 190 to 191 (NT) contacts substrate. Residues Gly-215, 241–242 (GG), and 263–264 (GT) each bind FMN.

The protein belongs to the dihydroorotate dehydrogenase family. Type 1 subfamily. Heterotetramer of 2 PyrK and 2 PyrD type B subunits. FMN serves as cofactor.

The protein localises to the cytoplasm. It carries out the reaction (S)-dihydroorotate + NAD(+) = orotate + NADH + H(+). It functions in the pathway pyrimidine metabolism; UMP biosynthesis via de novo pathway; orotate from (S)-dihydroorotate (NAD(+) route): step 1/1. Catalyzes the conversion of dihydroorotate to orotate with NAD(+) as electron acceptor. This Bacillus pumilus (strain SAFR-032) protein is Dihydroorotate dehydrogenase B (NAD(+)), catalytic subunit (pyrD).